The following is a 198-amino-acid chain: Imidazoleglycerol-phosphate dehydratase (198 aa).

It belongs to the imidazoleglycerol-phosphate dehydratase family.

The protein resides in the cytoplasm. It catalyses the reaction D-erythro-1-(imidazol-4-yl)glycerol 3-phosphate = 3-(imidazol-4-yl)-2-oxopropyl phosphate + H2O. The protein operates within amino-acid biosynthesis; L-histidine biosynthesis; L-histidine from 5-phospho-alpha-D-ribose 1-diphosphate: step 6/9. The chain is Imidazoleglycerol-phosphate dehydratase from Magnetococcus marinus (strain ATCC BAA-1437 / JCM 17883 / MC-1).